A 127-amino-acid polypeptide reads, in one-letter code: Small ribosomal subunit protein uS11 (127 aa).

It belongs to the universal ribosomal protein uS11 family. As to quaternary structure, part of the 30S ribosomal subunit. Interacts with proteins S7 and S18. Binds to IF-3.

Functionally, located on the platform of the 30S subunit, it bridges several disparate RNA helices of the 16S rRNA. Forms part of the Shine-Dalgarno cleft in the 70S ribosome. The chain is Small ribosomal subunit protein uS11 from Rhodopirellula baltica (strain DSM 10527 / NCIMB 13988 / SH1).